The chain runs to 150 residues: D-aminoacyl-tRNA deacylase (150 aa).

The Gly-cisPro motif, important for rejection of L-amino acids motif lies at 138-139 (GP).

This sequence belongs to the DTD family. As to quaternary structure, homodimer.

The protein resides in the cytoplasm. The catalysed reaction is glycyl-tRNA(Ala) + H2O = tRNA(Ala) + glycine + H(+). It carries out the reaction a D-aminoacyl-tRNA + H2O = a tRNA + a D-alpha-amino acid + H(+). An aminoacyl-tRNA editing enzyme that deacylates mischarged D-aminoacyl-tRNAs. Also deacylates mischarged glycyl-tRNA(Ala), protecting cells against glycine mischarging by AlaRS. Acts via tRNA-based rather than protein-based catalysis; rejects L-amino acids rather than detecting D-amino acids in the active site. By recycling D-aminoacyl-tRNA to D-amino acids and free tRNA molecules, this enzyme counteracts the toxicity associated with the formation of D-aminoacyl-tRNA entities in vivo and helps enforce protein L-homochirality. The chain is D-aminoacyl-tRNA deacylase from Akkermansia muciniphila (strain ATCC BAA-835 / DSM 22959 / JCM 33894 / BCRC 81048 / CCUG 64013 / CIP 107961 / Muc).